Consider the following 200-residue polypeptide: Probable nicotinate-nucleotide adenylyltransferase (200 aa).

This sequence belongs to the NadD family.

It catalyses the reaction nicotinate beta-D-ribonucleotide + ATP + H(+) = deamido-NAD(+) + diphosphate. The protein operates within cofactor biosynthesis; NAD(+) biosynthesis; deamido-NAD(+) from nicotinate D-ribonucleotide: step 1/1. Functionally, catalyzes the reversible adenylation of nicotinate mononucleotide (NaMN) to nicotinic acid adenine dinucleotide (NaAD). This is Probable nicotinate-nucleotide adenylyltransferase from Clostridium tetani (strain Massachusetts / E88).